A 279-amino-acid chain; its full sequence is Homeobox protein BarH-like 2 (279 aa).

Disordered regions lie at residues Ala110–Arg137 and Lys194–Ser279. The span at Ser118 to Pro128 shows a compositional bias: polar residues. The homeobox DNA-binding region spans Pro133–Val192. Residues Asn225 to Gln240 are compositionally biased toward polar residues. Pro residues predominate over residues Pro261 to Ser279.

The protein belongs to the BAR homeobox family. As to expression, highly expressed in adult salivary gland and at much lower levels in mammary gland, kidney and placenta.

The protein resides in the nucleus. Its function is as follows. Transcription factor. Binds optimally to the DNA consensus sequence 5'-YYTAATGRTTTTY-3'. May control the expression of neural adhesion molecules such as L1 or Ng-CAM during embryonic development of both the central and peripherical nervous system. May be involved in controlling adhesive processes in keratinizing epithelia. The polypeptide is Homeobox protein BarH-like 2 (BARX2) (Homo sapiens (Human)).